We begin with the raw amino-acid sequence, 168 residues long: Photosystem I assembly protein Ycf3 (168 aa).

TPR repeat units lie at residues 35 to 68 (AFTYYRDGMSAQSEGNYAEALQNYYEAMRLEIDP), 72 to 105 (SYILYNIGLIHTSNGEHTKALEYYFRALERNPFL), and 120 to 153 (GEQAIRQGDSEIAEAWFDQAAEYWKQAISLTPGN).

Belongs to the Ycf3 family.

Its subcellular location is the plastid. The protein localises to the chloroplast thylakoid membrane. Essential for the assembly of the photosystem I (PSI) complex. May act as a chaperone-like factor to guide the assembly of the PSI subunits. The protein is Photosystem I assembly protein Ycf3 of Coffea arabica (Arabian coffee).